The sequence spans 101 residues: Small ribosomal subunit protein uS10 (101 aa).

Belongs to the universal ribosomal protein uS10 family. Part of the 30S ribosomal subunit.

Functionally, involved in the binding of tRNA to the ribosomes. The protein is Small ribosomal subunit protein uS10 of Corynebacterium urealyticum (strain ATCC 43042 / DSM 7109).